The primary structure comprises 764 residues: Complement factor B (764 aa).

An N-terminal signal peptide occupies residues 1–25 (MGSNLSPQLCLMPFILGLLSGGVTT). Sushi domains lie at 35–100 (GSCS…ECRA), 101–160 (IHCP…ICDN), and 163–220 (GYCS…SCQD). Disulfide bonds link C37–C76, C62–C98, C103–C145, C131–C158, C165–C205, and C191–C218. Residues N122 and N142 are each glycosylated (N-linked (GlcNAc...) asparagine). The 200-residue stretch at 270-469 (NIYLVLDGSD…NLEDVFYQMI (200 aa)) folds into the VWFA domain. The Mg(2+) site is built by S278 and S280. N285 carries an N-linked (GlcNAc...) asparagine glycan. T353 serves as a coordination point for Mg(2+). A glycan (N-linked (GlcNAc...) asparagine) is linked at N378. The Peptidase S1 domain occupies 477–757 (LCGMVWEHRK…VLPWLKEKLQ (281 aa)). 5 disulfide bridges follow: C478/C596, C511/C527, C599/C615, C656/C682, and C695/C725. Residues H526 and D576 each act as charge relay system in the active site. The active-site Charge relay system is S699.

This sequence belongs to the peptidase S1 family. As to quaternary structure, monomer. Interacts with complement C3b; this interaction is dependent on the presence of Mg(2+). Catalytic component of the C3 convertase of the alternative complement pathway, also named C3bBb, composed of complement factor B Bb and complement C3b. Catalytic component of the C5 convertase of the alternative complement pathway, also named C3bBb3b, composed of complement factor B Bb and additional molecules of complement C3b. Interacts to CFP; this interaction contributes to the stabilization of the active C3-convertase enzyme complex. Mg(2+) serves as cofactor. It depends on Mn(2+) as a cofactor. Post-translationally, cleaved by CFD following activation of the alternative complement system, generating Ba and Bb chains. Cleavage and activation takes place when CFB is already associated with complement C3b.

The protein localises to the secreted. It localises to the cell surface. The enzyme catalyses Cleavage of Arg-|-Ser bond in complement component C3 alpha-chain to yield C3a and C3b, and Arg-|-Xaa bond in complement component C5 alpha-chain to yield C5a and C5b.. Its function is as follows. Precursor of the catalytic component of the C3 and C5 convertase complexes of the alternative pathway of the complement system, a cascade of proteins that leads to phagocytosis and breakdown of pathogens and signaling that strengthens the adaptive immune system. The alternative complement pathway acts as an amplification loop that enhances other complement pathways (classical, lectin and GZMK) by promoting formation of additional C3 and C5 convertases. CFB is cleaved and activated by CFD to generate Ba and Bb chains; Bb chain constituting the catalytic component of the C3 and C5 convertases. Functionally, serine protease component of the complement C3 and C5 convertase complexes of the alternative complement pathway. Following cleavage and activation by factor D (CFD), forms the C3 convertase together with complement C3b. As part of the C3 convertase, cleaves and activates C3 into C3a anaphylatoxin and C3b opsonin, the next components of the complement pathways. When an additional complement C3b molecule binds to the C3 convertase, forms the C5 convertase, which cleaves and activates C5 into C5a anaphylatoxin and C5b component of the membrane attack complex. Involved in proliferation and differentiation of preactivated B-lymphocytes, rapid spreading of peripheral blood monocytes, stimulation of lymphocyte blastogenesis and lysis of erythrocytes. The sequence is that of Complement factor B (CFB) from Gorilla gorilla gorilla (Western lowland gorilla).